We begin with the raw amino-acid sequence, 284 residues long: tRNA uridine(34) hydroxylase (284 aa).

One can recognise a Rhodanese domain in the interval Ala-132–Tyr-226. Cys-186 serves as the catalytic Cysteine persulfide intermediate.

It belongs to the TrhO family.

The enzyme catalyses uridine(34) in tRNA + AH2 + O2 = 5-hydroxyuridine(34) in tRNA + A + H2O. Functionally, catalyzes oxygen-dependent 5-hydroxyuridine (ho5U) modification at position 34 in tRNAs. This is tRNA uridine(34) hydroxylase from Burkholderia orbicola (strain MC0-3).